We begin with the raw amino-acid sequence, 551 residues long: Crossover junction endonuclease EME1B (551 aa).

Disordered regions lie at residues M1–V55 and T187–K239. A compositionally biased stretch (polar residues) spans S37 to T51. Residues S202 to K239 show a composition bias toward basic and acidic residues. Residues K203–S253 are a coiled coil. Residues N287–Y484 form the ERCC4 domain.

The protein belongs to the EME1/MMS4 family. Forms a heterodimer with MUS81. Requires Mg(2+) as cofactor. The cofactor is Ca(2+).

Its subcellular location is the nucleus. Interacts with MUS81 to form a DNA structure-specific endonuclease with substrate preference for branched DNA structures with a 5'-end at the branch nick. Typical substrates include 3'-flap structures, D-loops, replication forks, nicked Holliday junctions and also intact Holliday junctions with a reduced efficiency. May be required in mitosis for the processing of stalled or collapsed replication fork intermediates. Plays a role in DNA repair and in genotoxic stress-induced homologous recombination (HR) in somatic cells. Mediates a subset of meiotic recombination events that are insensitive to crossover interference. This is Crossover junction endonuclease EME1B (EME1B) from Arabidopsis thaliana (Mouse-ear cress).